The primary structure comprises 248 residues: Octanoyltransferase (248 aa).

The 186-residue stretch at 53–238 (ADTGDEIWVV…NLDGASAAAD (186 aa)) folds into the BPL/LPL catalytic domain. Residues 93–100 (RGGQITYH), 165–167 (ALG), and 178–180 (GLS) each bind substrate. The active-site Acyl-thioester intermediate is cysteine 196.

The protein belongs to the LipB family.

It localises to the cytoplasm. The enzyme catalyses octanoyl-[ACP] + L-lysyl-[protein] = N(6)-octanoyl-L-lysyl-[protein] + holo-[ACP] + H(+). The protein operates within protein modification; protein lipoylation via endogenous pathway; protein N(6)-(lipoyl)lysine from octanoyl-[acyl-carrier-protein]: step 1/2. Its function is as follows. Catalyzes the transfer of endogenously produced octanoic acid from octanoyl-acyl-carrier-protein onto the lipoyl domains of lipoate-dependent enzymes. Lipoyl-ACP can also act as a substrate although octanoyl-ACP is likely to be the physiological substrate. The chain is Octanoyltransferase from Burkholderia orbicola (strain MC0-3).